The following is a 1232-amino-acid chain: Pyruvate:ferredoxin oxidoreductase (1232 aa).

A pyruvate-binding site is contributed by Thr-31. Glu-64 is a binding site for thiamine diphosphate. Arg-114 is a pyruvate binding site. CoA is bound by residues 427–431 (ADGTV), Lys-459, Asn-560, and Asn-602. 2 4Fe-4S ferredoxin-type domains span residues 680–709 (NVPQ…PVLA) and 736–767 (FRIQ…MQPL). Residues Cys-689, Cys-692, Cys-695, Cys-699, Cys-745, Cys-748, Cys-751, Cys-755, Cys-812, and Cys-815 each coordinate [4Fe-4S] cluster. Thiamine diphosphate is bound by residues Glu-817, Cys-840, and 962 to 965 (GDGW). Position 840 (Cys-840) interacts with [4Fe-4S] cluster. Residue Asp-963 participates in Mg(2+) binding. Ca(2+) is bound by residues Asp-983 and Asn-985. Residues Thr-991 and Val-993 each coordinate Mg(2+). Thiamine diphosphate is bound at residue 991–996 (TEVYSN). Residues Ala-1056, Phe-1059, Gly-1061, and Ser-1063 each coordinate Ca(2+). Cys-1071 contacts [4Fe-4S] cluster. Cysteines 1195 and 1212 form a disulfide. A disordered region spans residues 1197–1232 (RDDTPMMARPDSGEACDQNRAGTSEQQGDLSKRTKK). The segment covering 1216-1225 (RAGTSEQQGD) has biased composition (polar residues).

Belongs to the pyruvate:ferredoxin/flavodoxin oxidoreductase family. Homodimer. It depends on [4Fe-4S] cluster as a cofactor. Requires thiamine diphosphate as cofactor. Mg(2+) is required as a cofactor.

It is found in the cytoplasm. It carries out the reaction 2 oxidized [2Fe-2S]-[ferredoxin] + pyruvate + CoA = 2 reduced [2Fe-2S]-[ferredoxin] + acetyl-CoA + CO2 + H(+). Its function is as follows. Catalyzes the ferredoxin-dependent oxidative decarboxylation of pyruvate. Required for the transfer of electrons from pyruvate to ferredoxin. Ferredoxin I and ferredoxin II, which are single 4Fe-4S cluster ferredoxins are the most effective electron carriers of POR. This is Pyruvate:ferredoxin oxidoreductase from Desulfocurvibacter africanus (Desulfovibrio africanus).